The sequence spans 109 residues: MSKALLRYIRLSPTKARLVAREVQGMNAELAIASLEFMPNKAAKVISKVIASAVANGGMGAENAVVKSCRVDAGPVLRRFTPRARGRATPIRKPTSHVFVEVVEQSKDK.

It belongs to the universal ribosomal protein uL22 family. Part of the 50S ribosomal subunit.

Functionally, this protein binds specifically to 23S rRNA; its binding is stimulated by other ribosomal proteins, e.g. L4, L17, and L20. It is important during the early stages of 50S assembly. It makes multiple contacts with different domains of the 23S rRNA in the assembled 50S subunit and ribosome. In terms of biological role, the globular domain of the protein is located near the polypeptide exit tunnel on the outside of the subunit, while an extended beta-hairpin is found that lines the wall of the exit tunnel in the center of the 70S ribosome. The sequence is that of Large ribosomal subunit protein uL22 from Wolinella succinogenes (strain ATCC 29543 / DSM 1740 / CCUG 13145 / JCM 31913 / LMG 7466 / NCTC 11488 / FDC 602W) (Vibrio succinogenes).